We begin with the raw amino-acid sequence, 469 residues long: ATP sulfurylase 4, chloroplastic (469 aa).

Residues 1–51 (MASSAAAIVSGSPFRSSPLIHNHHASRYAPGSISVVSLPRQVSRRGLSVKS) constitute a chloroplast transit peptide.

Belongs to the sulfate adenylyltransferase family. In terms of assembly, homotetramer. Expressed in roots and leaves.

The protein localises to the plastid. The protein resides in the chloroplast stroma. The enzyme catalyses sulfate + ATP + H(+) = adenosine 5'-phosphosulfate + diphosphate. It functions in the pathway sulfur metabolism; hydrogen sulfide biosynthesis; sulfite from sulfate: step 1/3. Sulfate adenylyltransferase. Catalyzes the first step of the sulfate assimilation pathway. This is ATP sulfurylase 4, chloroplastic (APS4) from Arabidopsis thaliana (Mouse-ear cress).